A 490-amino-acid chain; its full sequence is Serine hydroxymethyltransferase, mitochondrial (490 aa).

Residues 1–20 (MFPRASALAKCMATVHRRGL) constitute a mitochondrion transit peptide. K265 carries the post-translational modification N6-(pyridoxal phosphate)lysine.

This sequence belongs to the SHMT family. In terms of assembly, homotetramer. Interacts with NAP1. It depends on pyridoxal 5'-phosphate as a cofactor.

Its subcellular location is the mitochondrion. It carries out the reaction (6R)-5,10-methylene-5,6,7,8-tetrahydrofolate + glycine + H2O = (6S)-5,6,7,8-tetrahydrofolate + L-serine. Its pathway is one-carbon metabolism; tetrahydrofolate interconversion. Functionally, interconversion of serine and glycine. In Saccharomyces cerevisiae (strain ATCC 204508 / S288c) (Baker's yeast), this protein is Serine hydroxymethyltransferase, mitochondrial (SHM1).